A 442-amino-acid chain; its full sequence is UDP-N-acetylmuramoylalanine--D-glutamate ligase (442 aa).

ATP is bound at residue 113–119 (GSNGKTT).

Belongs to the MurCDEF family.

Its subcellular location is the cytoplasm. The enzyme catalyses UDP-N-acetyl-alpha-D-muramoyl-L-alanine + D-glutamate + ATP = UDP-N-acetyl-alpha-D-muramoyl-L-alanyl-D-glutamate + ADP + phosphate + H(+). It participates in cell wall biogenesis; peptidoglycan biosynthesis. Functionally, cell wall formation. Catalyzes the addition of glutamate to the nucleotide precursor UDP-N-acetylmuramoyl-L-alanine (UMA). The protein is UDP-N-acetylmuramoylalanine--D-glutamate ligase of Coxiella burnetii (strain CbuG_Q212) (Coxiella burnetii (strain Q212)).